The sequence spans 314 residues: Epithelial-stromal interaction protein 1 (314 aa).

4 disordered regions span residues 1–72 (MYPR…PNET), 200–219 (NRSA…WKLP), 225–267 (PSRA…HQEE), and 292–314 (SQPG…GWGI). Residues 43-58 (AEPKGPKLERQGHGDQ) show a composition bias toward basic and acidic residues. Residues 71-180 (ETRRQKIQRI…QEDIRRATLR (110 aa)) are a coiled coil. Basic and acidic residues predominate over residues 232–267 (AHKDSPQKEDNQKLQKTRDGHQKNKLLETKGQHQEE). Polar residues predominate over residues 305-314 (NMNSTDGWGI).

Plays a role in M1 macrophage polarization and is required for the proper regulation of gene expression during M1 versus M2 macrophage differentiation. Might play a role in RELA/p65 and STAT1 phosphorylation and nuclear localization upon activation of macrophages. This is Epithelial-stromal interaction protein 1 (Epsti1) from Rattus norvegicus (Rat).